The sequence spans 480 residues: Glutamate--tRNA ligase (480 aa).

The short motif at 21–31 (PSPTGYLHVGG) is the 'HIGH' region element. Residues C110, C112, C137, and H139 each coordinate Zn(2+). The short motif at 248 to 252 (KLSKR) is the 'KMSKS' region element. An ATP-binding site is contributed by K251.

It belongs to the class-I aminoacyl-tRNA synthetase family. Glutamate--tRNA ligase type 1 subfamily. As to quaternary structure, monomer. Zn(2+) serves as cofactor.

It is found in the cytoplasm. It carries out the reaction tRNA(Glu) + L-glutamate + ATP = L-glutamyl-tRNA(Glu) + AMP + diphosphate. Its function is as follows. Catalyzes the attachment of glutamate to tRNA(Glu) in a two-step reaction: glutamate is first activated by ATP to form Glu-AMP and then transferred to the acceptor end of tRNA(Glu). The sequence is that of Glutamate--tRNA ligase from Histophilus somni (strain 129Pt) (Haemophilus somnus).